A 60-amino-acid chain; its full sequence is UPF0434 protein CKO_02153 (60 aa).

It belongs to the UPF0434 family.

The protein is UPF0434 protein CKO_02153 of Citrobacter koseri (strain ATCC BAA-895 / CDC 4225-83 / SGSC4696).